A 138-amino-acid chain; its full sequence is Large-conductance mechanosensitive channel (138 aa).

The next 3 helical transmembrane spans lie at 19-39 (VGVIIGAAFGAIVSSLVGDVI), 40-60 (MPVIGAITGGLDFSNYFIGLS), and 81-101 (GSFLTVTLNFLIIAFVLFIVI).

This sequence belongs to the MscL family. Homopentamer.

The protein resides in the cell inner membrane. Its function is as follows. Channel that opens in response to stretch forces in the membrane lipid bilayer. May participate in the regulation of osmotic pressure changes within the cell. The protein is Large-conductance mechanosensitive channel of Afipia carboxidovorans (strain ATCC 49405 / DSM 1227 / KCTC 32145 / OM5) (Oligotropha carboxidovorans).